A 627-amino-acid polypeptide reads, in one-letter code: (+)-3-carene synthase 1, chloroplastic (627 aa).

Residues 1–36 constitute a chloroplast transit peptide; it reads MSVISIVPLASKPCLYKSFISSTHEPKALRRPISTV. Mg(2+)-binding residues include Asp-378, Asp-382, and Asp-530. The DDXXD motif signature appears at 378-382; sequence DDMYD.

Belongs to the terpene synthase family. Tpsd subfamily. Mg(2+) serves as cofactor. Requires Mn(2+) as cofactor.

The protein localises to the plastid. It localises to the chloroplast. It catalyses the reaction (2E)-geranyl diphosphate = (+)-car-3-ene + diphosphate. Its pathway is terpene metabolism; oleoresin biosynthesis. In terms of biological role, terpene synthase (TPS) involved in the biosynthesis of monoterpene natural products included in conifer oleoresin secretions and volatile emissions; these compounds contribute to biotic and abiotic stress defense against herbivores (e.g. insect attack by white pine weevil P.strobi) and pathogens. Catalyzes the conversion of (2E)-geranyl diphosphate (GPP) to (+)-car-3-ene. The polypeptide is (+)-3-carene synthase 1, chloroplastic (Picea sitchensis (Sitka spruce)).